Consider the following 336-residue polypeptide: Ornithine carbamoyltransferase, catabolic (336 aa).

Carbamoyl phosphate-binding positions include 62–65 (STRT), glutamine 89, arginine 113, and 140–143 (HPTQ). L-ornithine-binding positions include asparagine 172, aspartate 236, and 240–241 (SM). Carbamoyl phosphate contacts are provided by residues 277 to 278 (CL) and arginine 322.

It belongs to the aspartate/ornithine carbamoyltransferase superfamily. OTCase family.

It is found in the cytoplasm. The catalysed reaction is carbamoyl phosphate + L-ornithine = L-citrulline + phosphate + H(+). It participates in amino-acid degradation; L-arginine degradation via ADI pathway; carbamoyl phosphate from L-arginine: step 2/2. In terms of biological role, reversibly catalyzes the transfer of the carbamoyl group from carbamoyl phosphate (CP) to the N(epsilon) atom of ornithine (ORN) to produce L-citrulline. The chain is Ornithine carbamoyltransferase, catabolic from Staphylococcus aureus (strain MRSA252).